Consider the following 450-residue polypeptide: 3-phosphoshikimate 1-carboxyvinyltransferase (450 aa).

A disordered region spans residues 1–26 (MSAHGDPIPMTAHPSGPLSGTAQVPG). Positions 28, 29, and 33 each coordinate 3-phosphoshikimate. Phosphoenolpyruvate is bound at residue Lys28. Gly101 and Arg129 together coordinate phosphoenolpyruvate. Residues Ser174, Gln176, Asp327, and Lys354 each contribute to the 3-phosphoshikimate site. Gln176 contributes to the phosphoenolpyruvate binding site. Catalysis depends on Asp327, which acts as the Proton acceptor. Positions 358 and 403 each coordinate phosphoenolpyruvate.

The protein belongs to the EPSP synthase family. As to quaternary structure, monomer.

Its subcellular location is the cytoplasm. It catalyses the reaction 3-phosphoshikimate + phosphoenolpyruvate = 5-O-(1-carboxyvinyl)-3-phosphoshikimate + phosphate. Its pathway is metabolic intermediate biosynthesis; chorismate biosynthesis; chorismate from D-erythrose 4-phosphate and phosphoenolpyruvate: step 6/7. Its function is as follows. Catalyzes the transfer of the enolpyruvyl moiety of phosphoenolpyruvate (PEP) to the 5-hydroxyl of shikimate-3-phosphate (S3P) to produce enolpyruvyl shikimate-3-phosphate and inorganic phosphate. The sequence is that of 3-phosphoshikimate 1-carboxyvinyltransferase from Dinoroseobacter shibae (strain DSM 16493 / NCIMB 14021 / DFL 12).